Here is a 136-residue protein sequence, read N- to C-terminus: MVLLESEQFLTELTRLFQKCRTSGSVYITLKKYDGRTKPIPKKGTVEGFEPADNKCLLRATDGKKKISTVVSSKEVNKFQMAYSNLLRANMDGLKKRDKKNKTKKTKAAAAAAAAAPAAAATAPTTAATTAATAAQ.

A Phosphotyrosine modification is found at Tyr27. The segment at 116–136 is disordered; sequence APAAAATAPTTAATTAATAAQ.

The protein belongs to the SRP14 family. Heterodimer with SRP9; binds RNA as heterodimer. Component of a signal recognition particle (SRP) complex that consists of a 7SL RNA molecule of 300 nucleotides and six protein subunits: SRP72, SRP68, SRP54, SRP19, SRP14 and SRP9.

It is found in the cytoplasm. Component of the signal recognition particle (SRP) complex, a ribonucleoprotein complex that mediates the cotranslational targeting of secretory and membrane proteins to the endoplasmic reticulum (ER). SRP9 together with SRP14 and the Alu portion of the SRP RNA, constitutes the elongation arrest domain of SRP. The complex of SRP9 and SRP14 is required for SRP RNA binding. In Homo sapiens (Human), this protein is Signal recognition particle 14 kDa protein (SRP14).